The chain runs to 195 residues: Transcription factor LBX2 (195 aa).

Disordered stretches follow at residues 1-89 and 164-195; these read MNSV…KSRT and PALP…QVDD. Residues 84 to 143 constitute a DNA-binding region (homeobox); sequence RRKSRTAFTAQQVLELERRFVFQKYLAPSERDGLAARLGLANAQVVTWFQNRRAKLKRDV. Over residues 186-195 the composition is skewed to acidic residues; that stretch reads LSDEEIQVDD.

As to expression, expressed in the developing urogenital system, eye and brain.

It is found in the nucleus. In terms of biological role, transcription factor. The sequence is that of Transcription factor LBX2 (Lbx2) from Mus musculus (Mouse).